We begin with the raw amino-acid sequence, 734 residues long: Cytoplasmic polyadenylation element-binding protein 3 (734 aa).

3 disordered regions span residues 1–31 (MDRN…RNVP), 98–185 (GSKK…AARN), and 220–283 (RGSL…LPPR). Residues 16-26 (PAEHPGDEKSG) are compositionally biased toward basic and acidic residues. 2 stretches are compositionally biased toward low complexity: residues 121-140 (SRRT…SPSR) and 232-242 (KSFSSTTTSSS). The segment covering 243 to 256 (PEKEREKEKEKIEQ) has biased composition (basic and acidic residues). A compositionally biased stretch (polar residues) spans 259-275 (YGTTQRQSVNSQQSSAS). Positions 294–316 (IFVGGVPWDITEAALKDSFGEFG) constitute an RRM domain. Disordered regions lie at residues 564–593 (KAYQ…SNNS) and 630–657 (TVYD…SNSN). Low complexity predominate over residues 576 to 593 (LSSNSPSKARDGQNSNNS).

Its function is as follows. Cytoplasmic polyadenylation element binding protein that binds to and regulates the translation of specific mRNAs. This is Cytoplasmic polyadenylation element-binding protein 3 (cpb-3) from Caenorhabditis japonica.